The primary structure comprises 542 residues: Chaperonin GroEL (542 aa).

Residues 29-32 (TLGP), 86-90 (DGTTT), Gly413, 476-478 (NAA), and Asp492 each bind ATP.

The protein belongs to the chaperonin (HSP60) family. Forms a cylinder of 14 subunits composed of two heptameric rings stacked back-to-back. Interacts with the co-chaperonin GroES.

The protein resides in the cytoplasm. The enzyme catalyses ATP + H2O + a folded polypeptide = ADP + phosphate + an unfolded polypeptide.. Together with its co-chaperonin GroES, plays an essential role in assisting protein folding. The GroEL-GroES system forms a nano-cage that allows encapsulation of the non-native substrate proteins and provides a physical environment optimized to promote and accelerate protein folding. The polypeptide is Chaperonin GroEL (Listeria welshimeri serovar 6b (strain ATCC 35897 / DSM 20650 / CCUG 15529 / CIP 8149 / NCTC 11857 / SLCC 5334 / V8)).